Reading from the N-terminus, the 65-residue chain is Large ribosomal subunit protein bL35 (65 aa).

Belongs to the bacterial ribosomal protein bL35 family.

This chain is Large ribosomal subunit protein bL35, found in Xanthomonas campestris pv. campestris (strain ATCC 33913 / DSM 3586 / NCPPB 528 / LMG 568 / P 25).